Consider the following 439-residue polypeptide: Xylose isomerase (439 aa).

Residues His-103 and Asp-106 contribute to the active site. Positions 234, 270, 273, 298, 309, 311, and 341 each coordinate Mg(2+).

This sequence belongs to the xylose isomerase family. As to quaternary structure, homotetramer. Mg(2+) serves as cofactor.

It is found in the cytoplasm. The enzyme catalyses alpha-D-xylose = alpha-D-xylulofuranose. The protein is Xylose isomerase of Bacteroides fragilis (strain ATCC 25285 / DSM 2151 / CCUG 4856 / JCM 11019 / LMG 10263 / NCTC 9343 / Onslow / VPI 2553 / EN-2).